The sequence spans 663 residues: Translation factor GUF1 homolog, mitochondrial (663 aa).

The N-terminal 33 residues, 1-33, are a transit peptide targeting the mitochondrion; sequence MAGAAALRRSARRVVLPGAYALSRALQHPERLL. Residues 55 to 247 form the tr-type G domain; that stretch reads ERVRNFSIIA…AVIERIPSPP (193 aa). GTP is bound by residues 64–71, 140–144, and 194–197; these read AHVDHGKS, DTPGH, and NKID.

It belongs to the TRAFAC class translation factor GTPase superfamily. Classic translation factor GTPase family. LepA subfamily.

The protein resides in the mitochondrion inner membrane. It catalyses the reaction GTP + H2O = GDP + phosphate + H(+). Its function is as follows. Promotes mitochondrial protein synthesis. May act as a fidelity factor of the translation reaction, by catalyzing a one-codon backward translocation of tRNAs on improperly translocated ribosomes. Binds to mitochondrial ribosomes in a GTP-dependent manner. This Oryza sativa subsp. japonica (Rice) protein is Translation factor GUF1 homolog, mitochondrial.